Consider the following 387-residue polypeptide: MQVQILRMSRALAELGVRQQVLTVGFPGLPRVRRDSENLVVRITRAPLPRLRSRITGLVGLNQAWLAAALTECVKLRRRWPADLIQVHLDGQLWALLAGPVAARLVGVPYTVTVHCSRLAVYQPMSTVDRIQHPLVTAVERWALRRAAGITTLTERTATVLAAELGAAQRVIDVVPDAVDPDRAEAAPAEVERLKKRFGLPQEGGPVIGFVGRIAHEKGWRHAVQAVAELADAGRDFTFLVVGDGPQRADMEAAVAEAGLTDRFVFTGFLPNDEIPAVMTALDVLLMPSVHEELGGSAVEAMLAGTPVAAYGVGGLCDTVGKVTPSLLAAPGQVAELARTVKRVLDDPAPVLAELRAGREWLADEFGVHHAAGLALAHYERVLGKER.

It belongs to the glycosyltransferase group 1 family.

The enzyme catalyses 2-deoxystreptamine + UDP-N-acetyl-alpha-D-glucosamine = 2'-N-acetylparomamine + UDP + H(+). It catalyses the reaction 2-deoxystreptamine + UDP-alpha-D-glucose = 2'-deamino-2'-hydroxyparomamine + UDP + H(+). The protein operates within antibiotic biosynthesis; kanamycin biosynthesis. Functionally, glycosyltransferase involved in the biosynthesis of kanamycin by mediating conversion of 2-deoxystreptamine (2-DOS) to 2'-N-acetylparomamine using UDP-alpha-D-glucose as sugar donor. Can also accept UDP-alpha-D-glucosamine, but with a much lower activity compared to UDP-alpha-D-glucose. The sequence is that of 2-deoxystreptamine glucosyltransferase (kanF) from Streptomyces kanamyceticus.